Here is a 245-residue protein sequence, read N- to C-terminus: 1-(5-phosphoribosyl)-5-[(5-phosphoribosylamino)methylideneamino] imidazole-4-carboxamide isomerase (245 aa).

D11 functions as the Proton acceptor in the catalytic mechanism. The active-site Proton donor is D132.

This sequence belongs to the HisA/HisF family.

The protein resides in the cytoplasm. The enzyme catalyses 1-(5-phospho-beta-D-ribosyl)-5-[(5-phospho-beta-D-ribosylamino)methylideneamino]imidazole-4-carboxamide = 5-[(5-phospho-1-deoxy-D-ribulos-1-ylimino)methylamino]-1-(5-phospho-beta-D-ribosyl)imidazole-4-carboxamide. The protein operates within amino-acid biosynthesis; L-histidine biosynthesis; L-histidine from 5-phospho-alpha-D-ribose 1-diphosphate: step 4/9. This is 1-(5-phosphoribosyl)-5-[(5-phosphoribosylamino)methylideneamino] imidazole-4-carboxamide isomerase from Geobacillus thermodenitrificans (strain NG80-2).